The chain runs to 28 residues: GLLDTIKGVAKTVAASMLDKLKCKISGC.

A disulfide bridge connects residues cysteine 23 and cysteine 28.

Expressed by the skin glands.

The protein localises to the secreted. In terms of biological role, antibacterial activity against Gram-positive bacterium S.aureus and Gram-negative bacterium E.coli. Has activity against C.albicans. The protein is Ranatuerin-2B of Lithobates berlandieri (Rio Grande leopard frog).